Consider the following 164-residue polypeptide: Pyruvoyl-dependent arginine decarboxylase (164 aa).

Ser-52 is subject to Pyruvic acid (Ser).

Belongs to the PdaD family. The cofactor is pyruvate.

It carries out the reaction L-arginine + H(+) = agmatine + CO2. The chain is Pyruvoyl-dependent arginine decarboxylase from Methanococcus maripaludis (strain C6 / ATCC BAA-1332).